A 377-amino-acid polypeptide reads, in one-letter code: 2-aminoethylphosphonate--pyruvate transaminase (377 aa).

At K194 the chain carries N6-(pyridoxal phosphate)lysine.

This sequence belongs to the class-V pyridoxal-phosphate-dependent aminotransferase family. PhnW subfamily. As to quaternary structure, homodimer. The cofactor is pyridoxal 5'-phosphate.

It catalyses the reaction (2-aminoethyl)phosphonate + pyruvate = phosphonoacetaldehyde + L-alanine. Its function is as follows. Involved in phosphonate degradation. The protein is 2-aminoethylphosphonate--pyruvate transaminase of Cupriavidus necator (strain ATCC 17699 / DSM 428 / KCTC 22496 / NCIMB 10442 / H16 / Stanier 337) (Ralstonia eutropha).